Consider the following 864-residue polypeptide: MASSESRYSPTSLEPKWQQRWQEMGLDQTPEPSAERAENFYALSMFPYPSGNLHMGHVRNYVITDVIARLMRLKGKRVLHPMGWDAFGLPAENAAIERGVDPADWTDRNIAQMREQLQRLGLSIDWSREVATCHSDYYRWTQWLFLQFLNADLAYRKEATVNWDPIDQTVLANEQVDADGRSWRSGALAEKRKLRQWFLKITAVADELLDDLEQLKGWPERVRTMQANWIGRSSGATLRFAIEADGKQAIEVFTTRPDTVFGVSYVVLAPEHDLVDQLTSADQRQAVEAFRQSLQSISEQDRVADDRPKRGVATGGTVQHPFTGQAVPVWIADYVLPDYGTGAVMGVPAHDSRDFAFAKQYDLPITTVVVEPGQAPDSGEPSEAFTGLGELVGSADFDGLQGEEAKTAIIQAAEQRGVGAAKITFRLRDWLISRQRYWGCPIPVIHCDDCGVVPVPESDLPVELPRDVDLSGSGGSPLERATEWKQVRCPKCGKPATRETDTMDTFMCSSWYYLRYTDANNDSAAFTNASIDAWMPVDQYVGGVEHAILHLLYSRFFTKVLQQRNLVSCSEPFQKLLTQGMVQGVTYRNPKTRKYIAPSAVSDPNQPTDPDDGEALEVFFEKMSKSKYNGVDPGAVVDRYGADTARMFILFKAPPEKDLEWDDADVEGQFRFLQRIWRLCDGAKASGLQLQSPLPLPAELTPAETDLRRAVHTAIEAVSDDLQGDELQFNTAVSELMKLSNAMAGQLEAVSTAVAQEAVRSLLLLLAPFAPHLADELWEQLQGSGSIHQQRWPEVDASALVRDTITVVLQVKGKVRGNLEVPAAISKDELEQVALASDVAQKWLEGNAPKRVIVVPGKLVNLVP.

Positions 47-57 match the 'HIGH' region motif; that stretch reads PYPSGNLHMGH. The tract at residues 298-317 is disordered; sequence SEQDRVADDRPKRGVATGGT. Residues 299–309 are compositionally biased toward basic and acidic residues; sequence EQDRVADDRPK. The 'KMSKS' region signature appears at 622 to 626; it reads KMSKS. Lys625 is a binding site for ATP.

This sequence belongs to the class-I aminoacyl-tRNA synthetase family.

It localises to the cytoplasm. The catalysed reaction is tRNA(Leu) + L-leucine + ATP = L-leucyl-tRNA(Leu) + AMP + diphosphate. The chain is Leucine--tRNA ligase from Synechococcus sp. (strain RCC307).